We begin with the raw amino-acid sequence, 356 residues long: 3-dehydroquinate synthase (356 aa).

NAD(+) contacts are provided by residues 101 to 105 (GVIGD), 125 to 126 (TT), K138, and K147. 3 residues coordinate Zn(2+): E180, H243, and H260.

It belongs to the sugar phosphate cyclases superfamily. Dehydroquinate synthase family. Co(2+) serves as cofactor. The cofactor is Zn(2+). NAD(+) is required as a cofactor.

The protein resides in the cytoplasm. It carries out the reaction 7-phospho-2-dehydro-3-deoxy-D-arabino-heptonate = 3-dehydroquinate + phosphate. It functions in the pathway metabolic intermediate biosynthesis; chorismate biosynthesis; chorismate from D-erythrose 4-phosphate and phosphoenolpyruvate: step 2/7. Its function is as follows. Catalyzes the conversion of 3-deoxy-D-arabino-heptulosonate 7-phosphate (DAHP) to dehydroquinate (DHQ). The chain is 3-dehydroquinate synthase from Alkaliphilus metalliredigens (strain QYMF).